Reading from the N-terminus, the 403-residue chain is Indoleamine 2,3-dioxygenase 1 (403 aa).

A heme b-binding site is contributed by histidine 346. Residues 360-381 (QQPKENKTSEDPSKLEAKGTGG) are disordered. Over residues 363–376 (KENKTSEDPSKLEA) the composition is skewed to basic and acidic residues.

The protein belongs to the indoleamine 2,3-dioxygenase family. In terms of assembly, monomer. Heme b serves as cofactor. Expressed in mature dendritic cells located in lymphoid organs (including lymph nodes, spleen, tonsils, Peyers's patches, the gut lamina propria, and the thymic medulla), in some epithelial cells of the female genital tract, as well as in endothelial cells of term placenta and in lung parenchyma. Weakly or not expressed in most normal tissues, but mostly inducible in most tissues. Expressed in more than 50% of tumors, either by tumoral, stromal, or endothelial cells (expression in tumor is associated with a worse clinical outcome). Not overexpressed in tumor-draining lymph nodes.

The protein localises to the cytoplasm. It localises to the cytosol. It carries out the reaction D-tryptophan + O2 = N-formyl-D-kynurenine. It catalyses the reaction L-tryptophan + O2 = N-formyl-L-kynurenine. It participates in amino-acid degradation; L-tryptophan degradation via kynurenine pathway; L-kynurenine from L-tryptophan: step 1/2. Activity is inhibited by and MTH-trp (methylthiohydantoin-DL-tryptophan), modestly inhibited by L-1MT (1-methyl-L-tryptophan) but not D-1MT (1-methyl-D-tryptophan). In terms of biological role, catalyzes the first and rate limiting step of the catabolism of the essential amino acid tryptophan along the kynurenine pathway. Involved in the peripheral immune tolerance, contributing to maintain homeostasis by preventing autoimmunity or immunopathology that would result from uncontrolled and overreacting immune responses. Tryptophan shortage inhibits T lymphocytes division and accumulation of tryptophan catabolites induces T-cell apoptosis and differentiation of regulatory T-cells. Acts as a suppressor of anti-tumor immunity. Limits the growth of intracellular pathogens by depriving tryptophan. Protects the fetus from maternal immune rejection. The sequence is that of Indoleamine 2,3-dioxygenase 1 from Homo sapiens (Human).